Reading from the N-terminus, the 158-residue chain is Sporulation-delaying protein SdpA (158 aa).

The protein localises to the cytoplasm. Required for the maturation of SdpC to SDP. Not required for SdpC signal peptide cleavage, secretion from the cell or disulfide bond formation. This Bacillus subtilis (strain 168) protein is Sporulation-delaying protein SdpA.